We begin with the raw amino-acid sequence, 262 residues long: Acyl-[acyl-carrier-protein]--UDP-N-acetylglucosamine O-acyltransferase (262 aa).

This sequence belongs to the transferase hexapeptide repeat family. LpxA subfamily. Homotrimer.

Its subcellular location is the cytoplasm. The enzyme catalyses a (3R)-hydroxyacyl-[ACP] + UDP-N-acetyl-alpha-D-glucosamine = a UDP-3-O-[(3R)-3-hydroxyacyl]-N-acetyl-alpha-D-glucosamine + holo-[ACP]. It functions in the pathway glycolipid biosynthesis; lipid IV(A) biosynthesis; lipid IV(A) from (3R)-3-hydroxytetradecanoyl-[acyl-carrier-protein] and UDP-N-acetyl-alpha-D-glucosamine: step 1/6. Functionally, involved in the biosynthesis of lipid A, a phosphorylated glycolipid that anchors the lipopolysaccharide to the outer membrane of the cell. The protein is Acyl-[acyl-carrier-protein]--UDP-N-acetylglucosamine O-acyltransferase of Burkholderia multivorans (strain ATCC 17616 / 249).